A 270-amino-acid chain; its full sequence is Palmitoyltransferase ZDHHC12-A (270 aa).

Topologically, residues 1–8 are cytoplasmic; the sequence is MNKSLFKS. The chain crosses the membrane as a helical span at residues 9 to 29; that stretch reads GCLVRTAHVILTWIITLILFL. The Lumenal segment spans residues 30 to 45; the sequence is HNTDLRRCQERGDLLQ. A helical membrane pass occupies residues 46 to 66; it reads PLVFSSVLLLSVLLYFTVSLM. Residues 67 to 145 lie on the Cytoplasmic side of the membrane; the sequence is DPGFVLSDSQ…DNCVGELNHR (79 aa). Positions 102–152 constitute a DHHC domain; it reads RRCGYCFLLQPMRARHCKWCKRCVRRFDHHCPWIDNCVGELNHRWFLLYLC. Catalysis depends on cysteine 132, which acts as the S-palmitoyl cysteine intermediate. The helical transmembrane segment at 146–166 threads the bilayer; the sequence is WFLLYLCVQFTAVCWGLQSAW. Residues 167–182 are Lumenal-facing; the sequence is SGFISAPSWQQWFTQN. A helical membrane pass occupies residues 183–203; sequence VFLLVAFAVTAVFSVVLLLLL. The Cytoplasmic segment spans residues 204 to 270; the sequence is CIHAYLASVN…MYIRHNNASV (67 aa).

Belongs to the DHHC palmitoyltransferase family.

It is found in the golgi apparatus membrane. Its subcellular location is the endoplasmic reticulum membrane. The enzyme catalyses L-cysteinyl-[protein] + hexadecanoyl-CoA = S-hexadecanoyl-L-cysteinyl-[protein] + CoA. Palmitoyltransferase that catalyzes the addition of palmitate onto various protein substrates. Has a palmitoyltransferase activity toward gephyrin/GPHN, regulating its clustering at synapses and its function in gamma-aminobutyric acid receptor clustering. Acts as an inhibitor of the NLRP3 inflammasome by mediating palmitoylation of NLRP3, thereby promoting NLRP3 degradation by the chaperone-mediated autophagy (CMA) process. This is Palmitoyltransferase ZDHHC12-A from Danio rerio (Zebrafish).